Consider the following 176-residue polypeptide: Large ribosomal subunit protein uL10 (176 aa).

This sequence belongs to the universal ribosomal protein uL10 family. As to quaternary structure, part of the ribosomal stalk of the 50S ribosomal subunit. The N-terminus interacts with L11 and the large rRNA to form the base of the stalk. The C-terminus forms an elongated spine to which L12 dimers bind in a sequential fashion forming a multimeric L10(L12)X complex.

Its function is as follows. Forms part of the ribosomal stalk, playing a central role in the interaction of the ribosome with GTP-bound translation factors. This is Large ribosomal subunit protein uL10 from Leuconostoc citreum (strain KM20).